We begin with the raw amino-acid sequence, 320 residues long: Ferrochelatase (320 aa).

Fe cation contacts are provided by His-194 and Glu-275.

Belongs to the ferrochelatase family. In terms of assembly, monomer.

Its subcellular location is the cytoplasm. The enzyme catalyses heme b + 2 H(+) = protoporphyrin IX + Fe(2+). Its pathway is porphyrin-containing compound metabolism; protoheme biosynthesis; protoheme from protoporphyrin-IX: step 1/1. Catalyzes the ferrous insertion into protoporphyrin IX. This Shigella boydii serotype 18 (strain CDC 3083-94 / BS512) protein is Ferrochelatase.